The chain runs to 208 residues: Protein GrpE (208 aa).

Residues 1-12 (MTNKDESVEKNT) are compositionally biased toward basic and acidic residues. The disordered stretch occupies residues 1-51 (MTNKDESVEKNTESTVEETNVKQNIDDSVEQAEESKGHLQDEAIEETSDEN). The span at 13 to 23 (ESTVEETNVKQ) shows a compositional bias: polar residues. A compositionally biased stretch (acidic residues) spans 42-51 (EAIEETSDEN).

Belongs to the GrpE family. In terms of assembly, homodimer.

It localises to the cytoplasm. In terms of biological role, participates actively in the response to hyperosmotic and heat shock by preventing the aggregation of stress-denatured proteins, in association with DnaK and GrpE. It is the nucleotide exchange factor for DnaK and may function as a thermosensor. Unfolded proteins bind initially to DnaJ; upon interaction with the DnaJ-bound protein, DnaK hydrolyzes its bound ATP, resulting in the formation of a stable complex. GrpE releases ADP from DnaK; ATP binding to DnaK triggers the release of the substrate protein, thus completing the reaction cycle. Several rounds of ATP-dependent interactions between DnaJ, DnaK and GrpE are required for fully efficient folding. This chain is Protein GrpE, found in Staphylococcus aureus (strain USA300).